The following is a 906-amino-acid chain: Protein translocase subunit SecA (906 aa).

ATP-binding positions include Gln-86, 104 to 108 (GEGKT), and Asp-499. Residues 862–887 (KPVVSRIDPKDRNPDDPTSWGRVSRN) form a disordered region. The Zn(2+) site is built by Cys-890, Cys-892, Cys-901, and His-902.

It belongs to the SecA family. As to quaternary structure, monomer and homodimer. Part of the essential Sec protein translocation apparatus which comprises SecA, SecYEG and auxiliary proteins SecDF-YajC and YidC. The cofactor is Zn(2+).

It localises to the cell inner membrane. The protein localises to the cytoplasm. The enzyme catalyses ATP + H2O + cellular proteinSide 1 = ADP + phosphate + cellular proteinSide 2.. Part of the Sec protein translocase complex. Interacts with the SecYEG preprotein conducting channel. Has a central role in coupling the hydrolysis of ATP to the transfer of proteins into and across the cell membrane, serving both as a receptor for the preprotein-SecB complex and as an ATP-driven molecular motor driving the stepwise translocation of polypeptide chains across the membrane. In Rickettsia peacockii (strain Rustic), this protein is Protein translocase subunit SecA.